The primary structure comprises 1028 residues: Formate dehydrogenase major subunit (1028 aa).

A signal peptide (tat-type signal) is located at residues 1–33 (MQVSRRKFFKICAGGMAGTSAAMLGFAPANVLA). The 72-residue stretch at 43–114 (AFESRNTCTY…GSLDYVNSES (72 aa)) folds into the 4Fe-4S Mo/W bis-MGD-type domain. Cys-50, Cys-53, Cys-57, and Cys-100 together coordinate [4Fe-4S] cluster. Sec-204 is a non-standard amino acid (selenocysteine).

This sequence belongs to the prokaryotic molybdopterin-containing oxidoreductase family. In terms of assembly, formate dehydrogenase is a membrane-bound complex, formed by subunits alpha, beta and gamma. Mo-bis(molybdopterin guanine dinucleotide) is required as a cofactor. [4Fe-4S] cluster serves as cofactor. Predicted to be exported by the Tat system. The position of the signal peptide cleavage has not been experimentally proven.

The protein localises to the periplasm. It carries out the reaction formate + NAD(+) = CO2 + NADH. Functionally, allows to use formate as major electron donor during anaerobic respiration. Subunit alpha possibly forms the active site. The chain is Formate dehydrogenase major subunit (fdxG) from Haemophilus influenzae (strain ATCC 51907 / DSM 11121 / KW20 / Rd).